Reading from the N-terminus, the 318-residue chain is MFPSPALTPTPFSVKDILNLEQQQRSLASGDLSARLEATLAPASCMLAAFKPEAYSGPEAAASGLAELRAEMGPAPSPPKCSPAFPAAPTFYPGAYGDPDPAKDPRADKKELCALQKAVELDKAETDGAERPRARRRRKPRVLFSQAQVYELERRFKQQRYLSAPERDQLASVLKLTSTQVKIWFQNRRYKCKRQRQDQTLELLGPPPPPARRIAVPVLVRDGKPCLGDPAAYAPAYGVGLNAYGYNAYPYPSYGGAACSPGYSCAAYPAAPPAAQPPAASANSNFVNFGVGDLNTVQSPGMPQGNSGVSTLHGIRAW.

The homeobox DNA-binding region spans 137 to 196; the sequence is RRKPRVLFSQAQVYELERRFKQQRYLSAPERDQLASVLKLTSTQVKIWFQNRRYKCKRQR.

This sequence belongs to the NK-2 homeobox family. As to quaternary structure, homodimer (via the homeobox); binds DNA as homodimer. Interacts (via the homeobox) with TBX5 (via the T-box); this complex binds DNA. Interacts with HIPK1 and HIPK2, but not HIPK3. Interacts with the C-terminal zinc finger of GATA4 through its homeobox domain. Also interacts with JARID2 which represses its ability to activate transcription of ANF. Interacts with FBLIM1. Interacts with TBX18. Interacts with histone methyltransferase NSD2 (via HMG box). Interacts with NEDD9. Interacts with TBX1. In terms of tissue distribution, predominantly in the adult and embryonic heart, and to a lesser extent in lingual muscle, spleen and stomach.

It localises to the nucleus. In terms of biological role, transcription factor required for the development of the heart and the spleen. During heart development, acts as a transcriptional activator of NPPA/ANF in cooperation with GATA4. May cooperate with TBX2 to negatively modulate expression of NPPA/ANF in the atrioventricular canal. Binds to the core DNA motif of NPPA promoter. Together with PBX1, required for spleen development through a mechanism that involves CDKN2B repression. Positively regulates transcription of genes such as COL3A1 and MMP2, resulting in increased pulmonary endothelial fibrosis in response to hypoxia. In Mus musculus (Mouse), this protein is Homeobox protein Nkx-2.5 (Nkx2-5).